A 552-amino-acid chain; its full sequence is Scavenger receptor class B member 1 (552 aa).

Over 1–11 the chain is Cytoplasmic; sequence MGCSAKARWAA. The chain crosses the membrane as a helical span at residues 12–32; it reads GALGVAGLLCAVLGAVMIVMV. Residues 33–443 lie on the Extracellular side of the membrane; that stretch reads PSLIKQQVLK…LVLMPKVMHY (411 aa). 9 N-linked (GlcNAc...) asparagine glycosylation sites follow: N102, N108, N173, N212, N227, N255, N310, N330, and N383. C251 and C384 are disulfide-bonded. Residues Y393 and V458 each carry the phosphoserine modification. Residues 444–464 form a helical membrane-spanning segment; the sequence is AQYVLLALGCVLLLVPVICQI. C462 is lipidated: S-palmitoyl cysteine. Residues 465-552 lie on the Cytoplasmic side of the membrane; sequence RSQVGAGQRA…GPSLGGGTGS (88 aa). At T493 the chain carries Phosphoserine.

The protein belongs to the CD36 family. As to quaternary structure, the C-terminal region binds to PDZK1. (Microbial infection) Interacts with hepatitis C virus E1:E2 glycoproteins. N-glycosylated. In terms of processing, the six cysteines of the extracellular domain are all involved in intramolecular disulfide bonds. In terms of tissue distribution, widely expressed.

Its subcellular location is the cell membrane. The protein resides in the membrane. It localises to the caveola. Functionally, receptor for different ligands such as phospholipids, cholesterol ester, lipoproteins, phosphatidylserine and apoptotic cells. Receptor for HDL, mediating selective uptake of cholesteryl ether and HDL-dependent cholesterol efflux. Also facilitates the flux of free and esterified cholesterol between the cell surface and apoB-containing lipoproteins and modified lipoproteins, although less efficiently than HDL. May be involved in the phagocytosis of apoptotic cells, via its phosphatidylserine binding activity. Its function is as follows. (Microbial infection) Acts as a receptor for hepatitis C virus in hepatocytes and appears to facilitate its cell entry. Binding between SCARB1 and the hepatitis C virus glycoprotein E2 is independent of the genotype of the viral isolate. (Microbial infection) Mediates uptake of M.fortuitum, E.coli and S.aureus. In terms of biological role, (Microbial infection) Facilitates the entry of human coronavirus SARS-CoV-2 by acting as an entry cofactor through HDL binding. In Homo sapiens (Human), this protein is Scavenger receptor class B member 1 (SCARB1).